The following is a 176-amino-acid chain: Nascent polypeptide-associated complex subunit alpha (176 aa).

The NAC-A/B domain occupies 14–78 (SKNEKKAREL…AKVDDFTQRL (65 aa)). The interval 85–127 (LQQNEGVLPAGQDAVSKDPQSIQADMQAAADSATDKPSADDAV) is disordered. Positions 137–176 (LNADDIELVMQQAGVPRAKAAKALKEHDSDIVNAIMALSG) constitute a UBA domain.

Belongs to the NAC-alpha family. In terms of assembly, part of the nascent polypeptide-associated complex (NAC), consisting of EGD2 and EGD1. NAC associates with ribosomes via EGD1.

Its subcellular location is the cytoplasm. The protein resides in the nucleus. Functionally, component of the nascent polypeptide-associated complex (NAC), a dynamic component of the ribosomal exit tunnel, protecting the emerging polypeptides from interaction with other cytoplasmic proteins to ensure appropriate nascent protein targeting. The NAC complex also promotes mitochondrial protein import by enhancing productive ribosome interactions with the outer mitochondrial membrane and blocks the inappropriate interaction of ribosomes translating non-secretory nascent polypeptides with translocation sites in the membrane of the endoplasmic reticulum. EGD2 may also be involved in transcription regulation. This Kluyveromyces lactis (strain ATCC 8585 / CBS 2359 / DSM 70799 / NBRC 1267 / NRRL Y-1140 / WM37) (Yeast) protein is Nascent polypeptide-associated complex subunit alpha (EGD2).